The chain runs to 109 residues: MSAQPVDIQIFGRSLRVNCPPDQRDALNQAADDLNQRLQDLKERTRVTNTEQLVFIAALNISYELAQEKAKTRDYAASMEQRIRMLQQTIEQALLERGRITEKTNQNFE.

A coiled-coil region spans residues 21 to 100 (PDQRDALNQA…EQALLERGRI (80 aa)).

It belongs to the ZapA family. Type 1 subfamily. As to quaternary structure, homodimer. Interacts with FtsZ.

The protein localises to the cytoplasm. Its function is as follows. Activator of cell division through the inhibition of FtsZ GTPase activity, therefore promoting FtsZ assembly into bundles of protofilaments necessary for the formation of the division Z ring. It is recruited early at mid-cell but it is not essential for cell division. The chain is Cell division protein ZapA from Shigella dysenteriae serotype 1 (strain Sd197).